The sequence spans 397 residues: MSKLDSLFTAALEQAAQRQVRRRLRRATAAPPGRLALDGRTLVNFSSNDYLGLARHPLLAERASLWATRHGAGAQASRLVCGNLDLHEQVEAKLARLKGTEAALLLASGWQANAAVLPALFKAAAAQGEPQVYTDRLNHASLHHGCQAAGVRQIRFRHNDLAHLEHLLAERAGAPGARFIVTESVFSMDGDRADVPALAALAARHHTFLYLDEAHATGVLGPRGMGLAGLAPGGVDLAMGTFSKGLGSFGAYVAGSRALCDYLVNACSGFIYTTALPPAVLGAIDAALDLVPRLDQARAALLGHGERLRASLAAQGIDCGASSTQIVPAIVGDAGHALALAAELERRGLLAVAIRPPTVPAGTSRLRIALSAAHGETELDQLIEALAAGWRAVRQAA.

A substrate-binding site is contributed by Arg-22. Pyridoxal 5'-phosphate is bound at residue 109–110 (GW). His-139 provides a ligand contact to substrate. Pyridoxal 5'-phosphate contacts are provided by residues Ser-187, 212–215 (DEAH), and 241–244 (TFSK). An N6-(pyridoxal phosphate)lysine modification is found at Lys-244. Position 358 (Thr-358) interacts with substrate.

It belongs to the class-II pyridoxal-phosphate-dependent aminotransferase family. BioF subfamily. Homodimer. It depends on pyridoxal 5'-phosphate as a cofactor.

The enzyme catalyses 6-carboxyhexanoyl-[ACP] + L-alanine + H(+) = (8S)-8-amino-7-oxononanoate + holo-[ACP] + CO2. It participates in cofactor biosynthesis; biotin biosynthesis. Catalyzes the decarboxylative condensation of pimeloyl-[acyl-carrier protein] and L-alanine to produce 8-amino-7-oxononanoate (AON), [acyl-carrier protein], and carbon dioxide. The protein is Putative 8-amino-7-oxononanoate synthase (bioF) of Bordetella parapertussis (strain 12822 / ATCC BAA-587 / NCTC 13253).